Reading from the N-terminus, the 460-residue chain is UDP-N-acetylmuramate--L-alanine ligase (460 aa).

118–124 serves as a coordination point for ATP; that stretch reads GAHGKTT.

This sequence belongs to the MurCDEF family.

It is found in the cytoplasm. It carries out the reaction UDP-N-acetyl-alpha-D-muramate + L-alanine + ATP = UDP-N-acetyl-alpha-D-muramoyl-L-alanine + ADP + phosphate + H(+). The protein operates within cell wall biogenesis; peptidoglycan biosynthesis. In terms of biological role, cell wall formation. The sequence is that of UDP-N-acetylmuramate--L-alanine ligase from Clostridium botulinum (strain Eklund 17B / Type B).